The sequence spans 165 residues: NADPH-dependent 7-cyano-7-deazaguanine reductase (165 aa).

The active-site Thioimide intermediate is C56. D63 functions as the Proton donor in the catalytic mechanism. Substrate contacts are provided by residues 78-80 and 97-98; these read VES and HE.

This sequence belongs to the GTP cyclohydrolase I family. QueF type 1 subfamily.

It localises to the cytoplasm. It carries out the reaction 7-aminomethyl-7-carbaguanine + 2 NADP(+) = 7-cyano-7-deazaguanine + 2 NADPH + 3 H(+). It functions in the pathway tRNA modification; tRNA-queuosine biosynthesis. Catalyzes the NADPH-dependent reduction of 7-cyano-7-deazaguanine (preQ0) to 7-aminomethyl-7-deazaguanine (preQ1). The sequence is that of NADPH-dependent 7-cyano-7-deazaguanine reductase from Bacillus anthracis (strain A0248).